The chain runs to 186 residues: Adrenodoxin, mitochondrial (186 aa).

A mitochondrion-targeting transit peptide spans 1–58 (MAARLLRVASAALGDTAGRWRLLARPRAGAGGLRGSRGPGLGGGAVATRTLSVSGRAQ). S61 is subject to Phosphoserine. An N6-acetyllysine; alternate modification is found at K64. K64 is subject to N6-succinyllysine; alternate. In terms of domain architecture, 2Fe-2S ferredoxin-type spans 65-169 (ITVHFINRDG…NMTVRVPDAV (105 aa)). Residues C104, C110, C113, and C150 each contribute to the [2Fe-2S] cluster site. N6-succinyllysine is present on K156. The residue at position 175 (S175) is a Phosphoserine.

This sequence belongs to the adrenodoxin/putidaredoxin family. In terms of assembly, interacts with CYP11A1. [2Fe-2S] cluster is required as a cofactor. Detected in adrenal cortex and corpus luteum (at protein level).

The protein localises to the mitochondrion matrix. In terms of biological role, essential for the synthesis of various steroid hormones. Participates in the reduction of mitochondrial cytochrome P450 for steroidogenesis. Transfers electrons from adrenodoxin reductase to CYP11A1, a cytochrome P450 that catalyzes cholesterol side-chain cleavage to produce pregnenolone, the precursor of most steroid hormones. Does not form a ternary complex with adrenodoxin reductase and CYP11A1 but shuttles between the two enzymes to transfer electrons. This is Adrenodoxin, mitochondrial (FDX1) from Bos taurus (Bovine).